A 333-amino-acid polypeptide reads, in one-letter code: Dipeptide transport system permease protein DppB (333 aa).

6 helical membrane-spanning segments follow: residues 9 to 29 (ILMV…LVHF), 103 to 123 (AFFA…IAAV), 136 to 156 (ASLT…ILYV), 197 to 217 (AVKS…AIIT), 256 to 276 (LIPV…GAVL), and 306 to 326 (VLII…LYGV). Residues 96–328 (FPATAELAFF…TVDLLYGVVN (233 aa)) enclose the ABC transmembrane type-1 domain.

Belongs to the binding-protein-dependent transport system permease family. OppBC subfamily.

It is found in the cell inner membrane. Its function is as follows. Part of the ABC transporter DppBCDF involved in dipeptide transport. Responsible for the translocation of the substrate across the membrane. This Haemophilus influenzae (strain ATCC 51907 / DSM 11121 / KW20 / Rd) protein is Dipeptide transport system permease protein DppB (dppB).